Reading from the N-terminus, the 467-residue chain is Septin-10 (467 aa).

Positions 63 to 329 (QGFCFNILCV…ELYRRCKLEE (267 aa)) constitute a Septin-type G domain. A G1 motif region spans residues 73-80 (GETGIGKS). GTP-binding positions include 73–80 (GETGIGKS), glycine 128, 209–217 (KADTVSKTE), glycine 263, and arginine 278. A G3 motif region spans residues 125–128 (NTVG). The segment at 208–211 (AKAD) is G4 motif.

The protein belongs to the TRAFAC class TrmE-Era-EngA-EngB-Septin-like GTPase superfamily. Septin GTPase family. Septins polymerize into heterooligomeric protein complexes that form filaments, and can associate with cellular membranes, actin filaments and microtubules. GTPase activity is required for filament formation. Interacts with ADGB. In terms of processing, proteolytically cleaved in vitro in a calmodulin-dependent manner.

Its subcellular location is the cytoplasm. The protein resides in the cytoskeleton. It is found in the cell projection. It localises to the cilium. The protein localises to the flagellum. Filament-forming cytoskeletal GTPase. May play a role in cytokinesis (Potential). This is Septin-10 from Pongo abelii (Sumatran orangutan).